The chain runs to 241 residues: Uridylate kinase (241 aa).

Residues 10–13, Gly53, and Arg57 contribute to the ATP site; that span reads KLSG. UMP-binding positions include Asp72 and 133-140; that span reads AGSPYFST. Residues Asn161, Tyr167, and Asp170 each contribute to the ATP site.

This sequence belongs to the UMP kinase family. Homohexamer.

Its subcellular location is the cytoplasm. The enzyme catalyses UMP + ATP = UDP + ADP. Its pathway is pyrimidine metabolism; CTP biosynthesis via de novo pathway; UDP from UMP (UMPK route): step 1/1. Its activity is regulated as follows. Inhibited by UTP. Catalyzes the reversible phosphorylation of UMP to UDP. This is Uridylate kinase from Onion yellows phytoplasma (strain OY-M).